A 327-amino-acid chain; its full sequence is Eukaryotic translation initiation factor 3 subunit I (327 aa).

5 WD repeats span residues 8-49 (GHER…GSYD), 51-89 (HNGAVWDIDVSWDTSKCVTASGDLTVKIWDAELGSCIYT), 188-227 (VHRYSIQDLQLSPRGDFLISASRDKTAALLDVNDLKKLKQ), 229-268 (KSERPVNSACIAPNRDHICLGGGEDAMQVTQTAVSAGHFE), and 285-324 (GHFGPINTMAWHPSGSIIATGGEDGYVRIQEFDEDYLGFT).

This sequence belongs to the eIF-3 subunit I family. Component of the eukaryotic translation initiation factor 3 (eIF-3) complex.

It localises to the cytoplasm. Functionally, component of the eukaryotic translation initiation factor 3 (eIF-3) complex, which is involved in protein synthesis of a specialized repertoire of mRNAs and, together with other initiation factors, stimulates binding of mRNA and methionyl-tRNAi to the 40S ribosome. The eIF-3 complex specifically targets and initiates translation of a subset of mRNAs involved in cell proliferation. The protein is Eukaryotic translation initiation factor 3 subunit I of Caenorhabditis briggsae.